A 314-amino-acid chain; its full sequence is Acetyl-coenzyme A carboxylase carboxyl transferase subunit alpha (314 aa).

The region spanning 38–292 (RLERKSAALL…ANAIDEELDA (255 aa)) is the CoA carboxyltransferase C-terminal domain.

Belongs to the AccA family. In terms of assembly, acetyl-CoA carboxylase is a heterohexamer composed of biotin carboxyl carrier protein (AccB), biotin carboxylase (AccC) and two subunits each of ACCase subunit alpha (AccA) and ACCase subunit beta (AccD).

It localises to the cytoplasm. The catalysed reaction is N(6)-carboxybiotinyl-L-lysyl-[protein] + acetyl-CoA = N(6)-biotinyl-L-lysyl-[protein] + malonyl-CoA. The protein operates within lipid metabolism; malonyl-CoA biosynthesis; malonyl-CoA from acetyl-CoA: step 1/1. In terms of biological role, component of the acetyl coenzyme A carboxylase (ACC) complex. First, biotin carboxylase catalyzes the carboxylation of biotin on its carrier protein (BCCP) and then the CO(2) group is transferred by the carboxyltransferase to acetyl-CoA to form malonyl-CoA. This chain is Acetyl-coenzyme A carboxylase carboxyl transferase subunit alpha, found in Erythrobacter litoralis (strain HTCC2594).